A 448-amino-acid chain; its full sequence is Fibulin-5 (448 aa).

A signal peptide spans 1-23 (MPGLKRILTVTILALWLPHPGNA). The 41-residue stretch at 42–82 (DIDECRTIPEACRGDMMCVNQNGGYLCIPRTNPVYRGPYSN) folds into the EGF-like 1; calcium-binding domain. 17 cysteine pairs are disulfide-bonded: C46–C59, C53–C68, C131–C144, C138–C153, C155–C166, C172–C181, C177–C190, C192–C205, C211–C221, C217–C230, C232–C245, C251–C262, C258–C271, C273–C286, C292–C305, C299–C314, and C320–C332. A Cell attachment site motif is present at residues 54-56 (RGD). The EGF-like 2; calcium-binding domain occupies 127–167 (DVDECATDSHQCNPTQICINTEGGYTCSCTDGYWLLEGQCL). In terms of domain architecture, EGF-like 3; calcium-binding spans 168-206 (DIDECRYGYCQQLCANVPGSYSCTCNPGFTLNDDGRSCQ). Residues 207-246 (DVNECETENPCVQTCVNTYGSFICRCDPGYELEEDGIHCS) form the EGF-like 4; calcium-binding domain. An interaction with LOXL1 region spans residues 245–448 (CSDMDECSFS…LRIYVSQYPF (204 aa)). The region spanning 247–287 (DMDECSFSEFLCQHECVNQPGSYFCSCPPGYVLLEDNRSCQ) is the EGF-like 5; calcium-binding domain. Residues N283 and N296 are each glycosylated (N-linked (GlcNAc...) asparagine). The 46-residue stretch at 288–333 (DINECEHRNHTCTPLQTCYNLQGGFKCIDPIVCEEPYLLIGDNRCM) folds into the EGF-like 6; calcium-binding domain.

This sequence belongs to the fibulin family. In terms of assembly, homodimer. Monomer, homodimerizes in presence of Ca(2+). Interacts with ELN. Interacts (via N-terminus) with the integrins ITGAV/ITGB3, ITGAV/ITGB5 and ITGA9/ITGB1. Interacts with FBN1 (via N-terminal domain). Forms a ternary complex with ELN and FBN1. Interacts with EFEMP2 with moderate affinity. Interacts with LOXL1. Post-translationally, N-glycosylated.

The protein resides in the secreted. Its subcellular location is the extracellular space. It localises to the extracellular matrix. Its function is as follows. Essential for elastic fiber formation, is involved in the assembly of continuous elastin (ELN) polymer and promotes the interaction of microfibrils and ELN. Stabilizes and organizes elastic fibers in the skin, lung and vasculature. Promotes adhesion of endothelial cells through interaction of integrins and the RGD motif. Vascular ligand for integrin receptors which may play a role in vascular development and remodeling. May act as an adapter that mediates the interaction between FBN1 and ELN. This chain is Fibulin-5 (Fbln5), found in Rattus norvegicus (Rat).